A 567-amino-acid polypeptide reads, in one-letter code: Oxygen-dependent choline dehydrogenase (567 aa).

6 to 35 is an FAD binding site; that stretch reads DYIIVGAGSAGNTLATRLTEDEGVTVLLLE. His-475 (proton acceptor) is an active-site residue.

It belongs to the GMC oxidoreductase family. It depends on FAD as a cofactor.

The enzyme catalyses choline + A = betaine aldehyde + AH2. The catalysed reaction is betaine aldehyde + NAD(+) + H2O = glycine betaine + NADH + 2 H(+). Its pathway is amine and polyamine biosynthesis; betaine biosynthesis via choline pathway; betaine aldehyde from choline (cytochrome c reductase route): step 1/1. Involved in the biosynthesis of the osmoprotectant glycine betaine. Catalyzes the oxidation of choline to betaine aldehyde and betaine aldehyde to glycine betaine at the same rate. This chain is Oxygen-dependent choline dehydrogenase, found in Pseudomonas fluorescens (strain Pf0-1).